The sequence spans 421 residues: Probable G-protein coupled receptor 151 (421 aa).

The Extracellular segment spans residues 1–44 (MGKATLAVFADSDSSNMNESFAHLHFAGGYLPSDSKGWRTIIPS). An N-linked (GlcNAc...) asparagine glycan is attached at Asn18. The chain crosses the membrane as a helical span at residues 45–65 (LLAAVCLVGFVGNLCVIGLLL). Residues 66–74 (HGVWKRKPS) lie on the Cytoplasmic side of the membrane. Residues 75 to 95 (MIHSLILNLSLADISLLLFSA) traverse the membrane as a helical segment. Residues 96–122 (PVRATAYVKGVWDLGWFVCKSSDWFTH) lie on the Extracellular side of the membrane. The cysteines at positions 114 and 190 are disulfide-linked. The chain crosses the membrane as a helical span at residues 123 to 143 (MCMAAKSLTFVVVAKVCFMYA). The Cytoplasmic portion of the chain corresponds to 144 to 156 (SDPAKPVGTHNCT). A helical transmembrane segment spans residues 157-177 (IWSLLGAIWVVASLLPLPEWF). Residues 178 to 204 (FSTTRHHAGVEMCLVDVPAVAAEFMSL) are Extracellular-facing. A helical transmembrane segment spans residues 205–225 (FGKLYPLLVFCLPLLLAGFYF). Over 226-258 (WRAYNQCKIRCAKTQNLRNQMRSKQLTVMLLST) the chain is Cytoplasmic. Residues 259-279 (AVTSALLWLPEWIAWLWVWHL) form a helical membrane-spanning segment. The Extracellular segment spans residues 280–289 (KAGGPMPPQG). Residues 290-310 (FIALSQVLMFSISTVNPLIFL) traverse the membrane as a helical segment. The Cytoplasmic segment spans residues 311 to 421 (MMSEEFKAGL…HEGQETKGCN (111 aa)). Disordered regions lie at residues 346–381 (IETL…TDKV) and 394–421 (HERD…KGCN). 2 stretches are compositionally biased toward basic and acidic residues: residues 364–379 (DTDR…ETTD) and 409–421 (PWEH…KGCN).

The protein belongs to the G-protein coupled receptor 1 family. Exclusively expressed in neurons of the habenular complex. The expression is particularly prominent in the medial habenular nucleus, whereas the lateral habenular nucleus exhibited a lower level of expression.

It is found in the cell membrane. In terms of biological role, orphan receptor. The protein is Probable G-protein coupled receptor 151 (Gpr151) of Rattus norvegicus (Rat).